We begin with the raw amino-acid sequence, 170 residues long: Ribosome maturation factor RimM (170 aa).

Residues 97 to 170 (NADEYYWVDL…LVVVDWDPEF (74 aa)) enclose the PRC barrel domain.

Belongs to the RimM family. As to quaternary structure, binds ribosomal protein uS19.

Its subcellular location is the cytoplasm. In terms of biological role, an accessory protein needed during the final step in the assembly of 30S ribosomal subunit, possibly for assembly of the head region. Essential for efficient processing of 16S rRNA. May be needed both before and after RbfA during the maturation of 16S rRNA. It has affinity for free ribosomal 30S subunits but not for 70S ribosomes. The sequence is that of Ribosome maturation factor RimM from Stenotrophomonas maltophilia (strain R551-3).